The primary structure comprises 469 residues: MTQQQVRTRFAPSPTGFIHLGNIRSALYPWAFARANDGVFILRIEDTDLERSTQASVDVILEGMSWLQLDHDEGPYYQMQRMERYKEVLAQLQAAGHVYPCYMSVEELDALRERQMAAKEKPRYDGTWRPEPGKVLPPVPEGVKPVLRFKTPQGGVVGWDDKCKGRIEFQNSELDDLVIARPDGTPTYNFCVCVDDMDMRITHVIRGDDHVNNTPRQIHIFEALGATVPVFAHLPTVLNEQGEKMSKRNGAKAVTQYRDEGYLPDAMVNYLARLGWSHGDDEIFSRAQFLEWFNLDHLGRSAGQFDEAKLRWVNAQHLKAMEDAQLAALVRPFVVQAGVPETQLDADDRLPRICALFKDRCETLVDLARWARVFYVDAIEPDADDFAKHVTETAAPALDAFAAAMETVAWNKDAINAAIKDVLKQLGLKMPQLAMPVRVLTMGTAHTPSVDAVLELLGREKILARLKSR.

Positions 12 to 22 match the 'HIGH' region motif; that stretch reads PSPTGFIHLGN. A 'KMSKS' region motif is present at residues 244–248; the sequence is KMSKR. Lysine 247 contacts ATP.

This sequence belongs to the class-I aminoacyl-tRNA synthetase family. Glutamate--tRNA ligase type 1 subfamily. Monomer.

Its subcellular location is the cytoplasm. It catalyses the reaction tRNA(Glu) + L-glutamate + ATP = L-glutamyl-tRNA(Glu) + AMP + diphosphate. Functionally, catalyzes the attachment of glutamate to tRNA(Glu) in a two-step reaction: glutamate is first activated by ATP to form Glu-AMP and then transferred to the acceptor end of tRNA(Glu). The sequence is that of Glutamate--tRNA ligase from Acidovorax sp. (strain JS42).